A 136-amino-acid chain; its full sequence is Peptide methionine sulfoxide reductase MsrB (136 aa).

Positions 9–136 (DAEWKALLAE…NSASLDFKKK (128 aa)) constitute a MsrB domain. The Zn(2+) site is built by C53, C56, C102, and C105. The Nucleophile role is filled by C125.

Belongs to the MsrB Met sulfoxide reductase family. The cofactor is Zn(2+).

The enzyme catalyses L-methionyl-[protein] + [thioredoxin]-disulfide + H2O = L-methionyl-(R)-S-oxide-[protein] + [thioredoxin]-dithiol. The sequence is that of Peptide methionine sulfoxide reductase MsrB from Variovorax paradoxus (strain S110).